Here is a 465-residue protein sequence, read N- to C-terminus: Cysteine--tRNA ligase (465 aa).

Cys-27 serves as a coordination point for Zn(2+). The 'HIGH' region motif lies at 29 to 39 (PTVYNFFHIGN). Zn(2+)-binding residues include Cys-207, His-232, and Glu-236. Positions 264–268 (KMSKS) match the 'KMSKS' region motif. Lys-267 contacts ATP.

This sequence belongs to the class-I aminoacyl-tRNA synthetase family. In terms of assembly, monomer. Zn(2+) is required as a cofactor.

The protein localises to the cytoplasm. The catalysed reaction is tRNA(Cys) + L-cysteine + ATP = L-cysteinyl-tRNA(Cys) + AMP + diphosphate. In Clostridium botulinum (strain ATCC 19397 / Type A), this protein is Cysteine--tRNA ligase.